We begin with the raw amino-acid sequence, 458 residues long: Phosphoglucosamine mutase (458 aa).

Ser106 acts as the Phosphoserine intermediate in catalysis. Ser106, Asp247, Asp249, and Asp251 together coordinate Mg(2+). Ser106 carries the phosphoserine modification.

This sequence belongs to the phosphohexose mutase family. Requires Mg(2+) as cofactor. Activated by phosphorylation.

It carries out the reaction alpha-D-glucosamine 1-phosphate = D-glucosamine 6-phosphate. In terms of biological role, catalyzes the conversion of glucosamine-6-phosphate to glucosamine-1-phosphate. The protein is Phosphoglucosamine mutase of Chlamydia trachomatis serovar L2 (strain ATCC VR-902B / DSM 19102 / 434/Bu).